A 71-amino-acid polypeptide reads, in one-letter code: Small ribosomal subunit protein bS18 (71 aa).

This sequence belongs to the bacterial ribosomal protein bS18 family. Part of the 30S ribosomal subunit. Forms a tight heterodimer with protein bS6.

In terms of biological role, binds as a heterodimer with protein bS6 to the central domain of the 16S rRNA, where it helps stabilize the platform of the 30S subunit. In Synechococcus elongatus (strain ATCC 33912 / PCC 7942 / FACHB-805) (Anacystis nidulans R2), this protein is Small ribosomal subunit protein bS18.